Here is a 219-residue protein sequence, read N- to C-terminus: tRNA (guanine-N(7)-)-methyltransferase (219 aa).

4 residues coordinate S-adenosyl-L-methionine: Glu43, Asp68, Glu101, and Asn124. Substrate is bound by residues Lys128 and Asp160.

This sequence belongs to the class I-like SAM-binding methyltransferase superfamily. TrmB family.

It catalyses the reaction guanosine(46) in tRNA + S-adenosyl-L-methionine = N(7)-methylguanosine(46) in tRNA + S-adenosyl-L-homocysteine. Its pathway is tRNA modification; N(7)-methylguanine-tRNA biosynthesis. Its function is as follows. Catalyzes the formation of N(7)-methylguanine at position 46 (m7G46) in tRNA. This is tRNA (guanine-N(7)-)-methyltransferase from Clostridium beijerinckii (strain ATCC 51743 / NCIMB 8052) (Clostridium acetobutylicum).